A 45-amino-acid chain; its full sequence is Mu-conotoxin-like Cal 12.1.2g (45 aa).

4 disulfides stabilise this stretch: Cys-3/Cys-16, Cys-11/Cys-28, Cys-18/Cys-33, and Cys-27/Cys-39. Position 23 is a 4-hydroxyproline (Pro-23). 2 positions are modified to 6'-bromotryptophan: Trp-37 and Trp-38. Pro-40 carries the post-translational modification 4-hydroxyproline.

Expressed by the venom duct.

It localises to the secreted. Functionally, mu-conotoxins block voltage-gated sodium channels. This toxin reversibly blocks voltage-gated sodium channel in cephalopods, with no alteration in the voltage dependence of sodium conductance or on the kinetics of inactivation. This chain is Mu-conotoxin-like Cal 12.1.2g, found in Californiconus californicus (California cone).